Here is a 169-residue protein sequence, read N- to C-terminus: Peptide methionine sulfoxide reductase MsrA (169 aa).

The active site involves cysteine 10.

Belongs to the MsrA Met sulfoxide reductase family.

The enzyme catalyses L-methionyl-[protein] + [thioredoxin]-disulfide + H2O = L-methionyl-(S)-S-oxide-[protein] + [thioredoxin]-dithiol. It carries out the reaction [thioredoxin]-disulfide + L-methionine + H2O = L-methionine (S)-S-oxide + [thioredoxin]-dithiol. Has an important function as a repair enzyme for proteins that have been inactivated by oxidation. Catalyzes the reversible oxidation-reduction of methionine sulfoxide in proteins to methionine. This Streptococcus equi subsp. zooepidemicus (strain H70) protein is Peptide methionine sulfoxide reductase MsrA.